Reading from the N-terminus, the 1226-residue chain is Methionine synthase (1226 aa).

The Hcy-binding domain occupies 7–327 (KVQIEKQLSE…EHIRQMALVV (321 aa)). Zn(2+)-binding residues include Cys249, Cys312, and Cys313. A Pterin-binding domain is found at 358–619 (FINVGERTNV…VPEDLREAVE (262 aa)). Residues 652-746 (SALEWRDWPV…FINASKEVGA (95 aa)) enclose the B12-binding N-terminal domain. Residues Glu696, 758–762 (GDVHD), His761, Ser806, Thr810, and Ala862 each bind methylcob(III)alamin. The region spanning 748–883 (NGKILLATVK…SDELKPSFVE (136 aa)) is the B12-binding domain. Residues 899 to 1226 (KQPRTKPVTL…AEKWLGPNLN (328 aa)) form the AdoMet activation domain. S-adenosyl-L-methionine is bound by residues Asp949, Arg1137, and 1192 to 1193 (YF).

This sequence belongs to the vitamin-B12 dependent methionine synthase family. The cofactor is methylcob(III)alamin. Zn(2+) serves as cofactor.

The enzyme catalyses (6S)-5-methyl-5,6,7,8-tetrahydrofolate + L-homocysteine = (6S)-5,6,7,8-tetrahydrofolate + L-methionine. It functions in the pathway amino-acid biosynthesis; L-methionine biosynthesis via de novo pathway; L-methionine from L-homocysteine (MetH route): step 1/1. Functionally, catalyzes the transfer of a methyl group from methyl-cobalamin to homocysteine, yielding enzyme-bound cob(I)alamin and methionine. Subsequently, remethylates the cofactor using methyltetrahydrofolate. The chain is Methionine synthase (metH) from Aliivibrio fischeri (strain ATCC 700601 / ES114) (Vibrio fischeri).